A 204-amino-acid chain; its full sequence is Holliday junction branch migration complex subunit RuvA (204 aa).

Residues 1-64 (MISRMKGIIL…EDAQLLYGFH (64 aa)) form a domain I region. Positions 65–143 (HPKERAMFSE…NLNKNLFKST (79 aa)) are domain II. The interval 144–155 (ADHMLSSVSTDL) is flexible linker. The segment at 156–204 (SAKSAEAEAISALISLGYKPQEAAQLIKNIAQPDLDSQALIKHALRSTL) is domain III.

This sequence belongs to the RuvA family. In terms of assembly, homotetramer. Forms an RuvA(8)-RuvB(12)-Holliday junction (HJ) complex. HJ DNA is sandwiched between 2 RuvA tetramers; dsDNA enters through RuvA and exits via RuvB. An RuvB hexamer assembles on each DNA strand where it exits the tetramer. Each RuvB hexamer is contacted by two RuvA subunits (via domain III) on 2 adjacent RuvB subunits; this complex drives branch migration. In the full resolvosome a probable DNA-RuvA(4)-RuvB(12)-RuvC(2) complex forms which resolves the HJ.

The protein resides in the cytoplasm. Functionally, the RuvA-RuvB-RuvC complex processes Holliday junction (HJ) DNA during genetic recombination and DNA repair, while the RuvA-RuvB complex plays an important role in the rescue of blocked DNA replication forks via replication fork reversal (RFR). RuvA specifically binds to HJ cruciform DNA, conferring on it an open structure. The RuvB hexamer acts as an ATP-dependent pump, pulling dsDNA into and through the RuvAB complex. HJ branch migration allows RuvC to scan DNA until it finds its consensus sequence, where it cleaves and resolves the cruciform DNA. In Hamiltonella defensa subsp. Acyrthosiphon pisum (strain 5AT), this protein is Holliday junction branch migration complex subunit RuvA.